The chain runs to 279 residues: Non-structural maintenance of chromosomes element 3 homolog (279 aa).

The disordered stretch occupies residues 1 to 52 (MLQKPRGRGRPSTQADPERDWGGAGEEGPSTSRAAGGSSQGSRASLSAPTVG). Residues 30 to 48 (STSRAAGGSSQGSRASLSA) are compositionally biased toward low complexity. S38 is subject to Phosphoserine. The tract at residues 52 to 279 (GPRTQKQLEL…ATASAPATSS (228 aa)) is interaction with NSMCE1. Residues 59 to 259 (LELKVAELVQ…KDWPTQYCEA (201 aa)) form the MAGE domain.

In terms of assembly, component of the SMC5-SMC6 complex which consists at least of SMC5, SMC6, NSMCE2, NSMCE1, NSMCE4A or EID3 and NSMCE3. NSMCE1, NSMCE4A or EID3 and NSMCE3 probably form a subcomplex that bridges the head domains of the SMC5:SMC6 heterodimer. Interacts with PJA1. Interacts with E2F1 (via C-terminus). Interacts with NGFR (via C-terminus). Interacts with NSMCE1. Interacts with NSMCE4. Interacts with SMC6. Interacts with EID3. In terms of tissue distribution, ubiquitous.

It is found in the cytoplasm. The protein resides in the nucleus. Its subcellular location is the chromosome. The protein localises to the telomere. Its function is as follows. Component of the SMC5-SMC6 complex, a complex involved in repair of DNA double-strand breaks by homologous recombination. The complex may promote sister chromatid homologous recombination by recruiting the SMC1-SMC3 cohesin complex to double-strand breaks. The complex is required for telomere maintenance via recombination in ALT (alternative lengthening of telomeres) cell lines and mediates sumoylation of shelterin complex (telosome) components which is proposed to lead to shelterin complex disassembly in ALT-associated PML bodies (APBs). In vitro enhances ubiquitin ligase activity of NSMCE1. Proposed to act through recruitment and/or stabilization of the Ubl-conjugating enzyme (E2) at the E3:substrate complex. May be a growth suppressor that facilitates the entry of the cell into cell cycle arrest. The chain is Non-structural maintenance of chromosomes element 3 homolog (Nsmce3) from Mus musculus (Mouse).